The following is a 189-amino-acid chain: NADH-quinone oxidoreductase subunit B (189 aa).

[4Fe-4S] cluster contacts are provided by Cys39, Cys40, Cys104, and Cys135.

The protein belongs to the complex I 20 kDa subunit family. As to quaternary structure, NDH-1 is composed of 14 different subunits. Subunits NuoB, C, D, E, F, and G constitute the peripheral sector of the complex. [4Fe-4S] cluster is required as a cofactor.

It localises to the cell inner membrane. It carries out the reaction a quinone + NADH + 5 H(+)(in) = a quinol + NAD(+) + 4 H(+)(out). In terms of biological role, NDH-1 shuttles electrons from NADH, via FMN and iron-sulfur (Fe-S) centers, to quinones in the respiratory chain. The immediate electron acceptor for the enzyme in this species is believed to be a menaquinone. Couples the redox reaction to proton translocation (for every two electrons transferred, four hydrogen ions are translocated across the cytoplasmic membrane), and thus conserves the redox energy in a proton gradient. This is NADH-quinone oxidoreductase subunit B from Chlorobaculum tepidum (strain ATCC 49652 / DSM 12025 / NBRC 103806 / TLS) (Chlorobium tepidum).